The sequence spans 524 residues: Na(+)/H(+) antiporter NhaB (524 aa).

9 helical membrane-spanning segments follow: residues 13-33 (FLGN…IINP), 98-118 (LLLV…LFVF), 140-160 (AFLS…SVSV), 239-259 (FFIR…LVCL), 304-324 (AIIG…VGLV), 325-345 (GLSV…HSLG), 358-378 (LTVF…TPII), 448-468 (ATPN…APLI), and 479-499 (ALPY…FLLV).

It belongs to the NhaB Na(+)/H(+) (TC 2.A.34) antiporter family.

It is found in the cell inner membrane. It carries out the reaction 2 Na(+)(in) + 3 H(+)(out) = 2 Na(+)(out) + 3 H(+)(in). Functionally, na(+)/H(+) antiporter that extrudes sodium in exchange for external protons. This Yersinia pseudotuberculosis serotype O:3 (strain YPIII) protein is Na(+)/H(+) antiporter NhaB.